The primary structure comprises 443 residues: Tol-Pal system protein TolB (443 aa).

The N-terminal stretch at 1–33 (MKIGIINTKIRTVFSAFACMIAASLVCTMPARA) is a signal peptide.

Belongs to the TolB family. The Tol-Pal system is composed of five core proteins: the inner membrane proteins TolA, TolQ and TolR, the periplasmic protein TolB and the outer membrane protein Pal. They form a network linking the inner and outer membranes and the peptidoglycan layer.

It is found in the periplasm. Its function is as follows. Part of the Tol-Pal system, which plays a role in outer membrane invagination during cell division and is important for maintaining outer membrane integrity. This chain is Tol-Pal system protein TolB, found in Brucella suis (strain ATCC 23445 / NCTC 10510).